We begin with the raw amino-acid sequence, 537 residues long: Putative cysteine ligase BshC (537 aa).

Positions 417–457 form a coiled coil; the sequence is ASEQFLNELDQLEAQQKETYERLAAEVQGNEDNKNLVEKNN.

This sequence belongs to the BshC family.

Functionally, involved in bacillithiol (BSH) biosynthesis. May catalyze the last step of the pathway, the addition of cysteine to glucosamine malate (GlcN-Mal) to generate BSH. The polypeptide is Putative cysteine ligase BshC (Staphylococcus carnosus (strain TM300)).